We begin with the raw amino-acid sequence, 1245 residues long: Structural polyprotein (1245 aa).

Residues M1–M106 are disordered. The tract at residues G37 to R70 is host transcription inhibition. Residues L38–V49 are compositionally biased toward polar residues. The Nuclear localization signal signature appears at P63–P100. A compositionally biased stretch (basic residues) spans P67 to M106. Positions K86–L115 are binding to the viral RNA. Residues P100–R114 form a ribosome-binding region. The Peptidase S3 domain maps to R114 to W264. H141 (charge relay system) is an active-site residue. The Nuclear export signal motif lies at I146–F156. The interaction with spike glycoprotein E2 stretch occupies residues T157 to Y162. D163 serves as the catalytic Charge relay system. Positions P185–A195 are dimerization of the capsid protein. S215 serves as the catalytic Charge relay system. The segment at D221–R225 is dimerization of the capsid protein. An interaction with spike glycoprotein E2 region spans residues S249–T253. Residues S265–V279 form a functions as an uncleaved signal peptide for the precursor of protein E3/E2 region. N278 carries N-linked (GlcNAc...) asparagine; by host glycosylation. Disulfide bonds link C283–C289, C480–C594, C529–C554, and C531–C548. Residues S329–R690 lie on the Extracellular side of the membrane. An N-linked (GlcNAc...) asparagine; by host glycan is attached at N524. Residue N646 is glycosylated (N-linked (GlcNAc...) asparagine; by host). A coiled-coil region spans residues E682–L730. The helical transmembrane segment at H691–C718 threads the bilayer. Positions K719–E723 are interaction with the capsid protein. Residues K719–A751 are Cytoplasmic-facing. 3 S-palmitoyl cysteine; by host lipidation sites follow: C724, C744, and C745. A disulfide bridge connects residues C724 and C745. Over E752–S763 the chain is Extracellular. Residues N764–M784 traverse the membrane as a helical segment. Residue R785 is a topological domain, cytoplasmic. The chain crosses the membrane as a helical span at residues C786 to A806. Over Y807–S1214 the chain is Extracellular. 4 disulfides stabilise this stretch: C855–C920, C868–C900, C869–C902, and C874–C884. An E1 fusion peptide loop region spans residues V890–S907. Residues N945 and N1051 are each glycosylated (N-linked (GlcNAc...) asparagine; by host). Cystine bridges form between C1065/C1077, C1107/C1182, C1112/C1186, and C1134/C1176. Positions T1196–R1245 form a coiled coil. The chain crosses the membrane as a helical span at residues W1215 to M1239. Topologically, residues L1240–R1245 are cytoplasmic.

This sequence belongs to the alphavirus structural polyprotein family. Homomultimer. Interacts with host karyopherin KPNA4; this interaction allows the nuclear import of the viral capsid protein. Interacts with spike glycoprotein E2. Interacts with host IRAK1; the interaction leads to inhibition of IRAK1-dependent signaling. In terms of assembly, the precursor of protein E3/E2 and E1 form a heterodimer shortly after synthesis. As to quaternary structure, the precursor of protein E3/E2 and E1 form a heterodimer shortly after synthesis. Processing of the precursor of protein E3/E2 into E2 and E3 results in a heterodimer of the spike glycoproteins E2 and E1. Spike at virion surface are constituted of a trimer of E2-E1 heterodimers. After target cell attachment and endocytosis, E1 change conformation to form homotrimers. E2-E1 heterodimers interact with host VLDLR or LRP8/APOER2 to mediate viral entry. Interacts with 6K protein. Interacts with spike glycoprotein E1. Processing of the precursor of protein E3/E2 into E2 and E3 results in a heterodimer of the spike glycoproteins E2 and E1. Spike at virion surface are constituted of a trimer of E2-E1 heterodimers. E2-E1 heterodimers interact with host VLDLR or LRP8/APOER2 to mediate viral entry. Interacts with 6K protein. Interacts with the capsid protein. In terms of assembly, oligomer. Interacts with spike glycoprotein E1. Interacts with spike glycoprotein E2. Post-translationally, specific enzymatic cleavages in vivo yield mature proteins. Capsid protein is auto-cleaved during polyprotein translation, unmasking a signal peptide at the N-terminus of the precursor of E3/E2. The remaining polyprotein is then targeted to the host endoplasmic reticulum, where host signal peptidase cleaves it into pE2, 6K and E1 proteins. pE2 is further processed to mature E3 and E2 by host furin in trans-Golgi vesicle. Palmitoylated via thioester bonds. These palmitoylations may induce disruption of the C-terminus transmembrane. This would result in the reorientation of E2 C-terminus from lumenal to cytoplasmic side. In terms of processing, N-glycosylated. Post-translationally, palmitoylated via thioester bonds.

Its subcellular location is the virion. The protein resides in the host cytoplasm. It localises to the host cell membrane. The protein localises to the host nucleus. It is found in the virion membrane. Its subcellular location is the host Golgi apparatus. The protein resides in the host trans-Golgi network. It localises to the host endoplasmic reticulum. The catalysed reaction is Autocatalytic release of the core protein from the N-terminus of the togavirus structural polyprotein by hydrolysis of a -Trp-|-Ser- bond.. The channel activity is blocked by 5-N, N-Hexamethylene amiloride. In terms of biological role, forms an icosahedral capsid with a T=4 symmetry composed of 240 copies of the capsid protein surrounded by a lipid membrane through which penetrate 80 spikes composed of trimers of E1-E2 heterodimers. The capsid protein binds to the viral RNA genome at a site adjacent to a ribosome binding site for viral genome translation following genome release. Possesses a protease activity that results in its autocatalytic cleavage from the nascent structural protein. Following its self-cleavage, the capsid protein transiently associates with ribosomes, and within several minutes the protein binds to viral RNA and rapidly assembles into icosahedric core particles. The resulting nucleocapsid eventually associates with the cytoplasmic domain of the spike glycoprotein E2 at the cell membrane, leading to budding and formation of mature virions. In case of infection, new virions attach to target cells and after clathrin-mediated endocytosis their membrane fuses with the host endosomal membrane. This leads to the release of the nucleocapsid into the cytoplasm, followed by an uncoating event necessary for the genomic RNA to become accessible. The uncoating might be triggered by the interaction of capsid proteins with ribosomes. Binding of ribosomes would release the genomic RNA since the same region is genomic RNA-binding and ribosome-binding. Specifically inhibits interleukin-1 receptor-associated kinase 1/IRAK1-dependent signaling during viral entry, representing a means by which the alphaviruses may evade innate immune detection and activation prior to viral gene expression. Provides the signal sequence for the translocation of the precursor of protein E3/E2 to the host endoplasmic reticulum. Furin-cleaved E3 remains associated with spike glycoprotein E1 and mediates pH protection of the latter during the transport via the secretory pathway. After virion release from the host cell, the assembly protein E3 is gradually released in the extracellular space. Functionally, plays a role in viral attachment to target host cell, by binding to the cell receptors VLDLR or LRP8/APOER2. Synthesized as a pE2 precursor which is processed by furin at the cell membrane just before virion budding, giving rise to E2-E1 heterodimer. The pE2-E1 heterodimer is stable, whereas E2-E1 is unstable and dissociate at low pH. pE2 is processed at the last step, presumably to avoid E1 fusion activation before its final export to cell surface. E2 C-terminus contains a transitory transmembrane that would be disrupted by palmitoylation, resulting in reorientation of the C-terminal tail from lumenal to cytoplasmic side. This step is critical since E2 C-terminus is involved in budding by interacting with capsid proteins. This release of E2 C-terminus in cytoplasm occurs lately in protein export, and precludes premature assembly of particles at the endoplasmic reticulum membrane. Its function is as follows. Acts as a viroporin that participates in virus glycoprotein processing and transport to the plasma membrane, cell permeabilization and budding of viral particles. Disrupts the calcium homeostasis of the cell, probably at the endoplasmic reticulum level resulting in the increased levels of cytoplasmic calcium. Because of its lipophilic properties, the 6K protein is postulated to influence the selection of lipids that interact with the transmembrane domains of the glycoproteins, which, in turn, affects the deformability of the bilayer required for the extreme curvature that occurs as budding proceeds. Present in low amount in virions, about 3% compared to viral glycoproteins. In terms of biological role, class II viral fusion protein. Fusion activity is inactive as long as E1 is bound to E2 in mature virion. After virus attachment to target cell via host VLDLR or LRP8/APOER2 and endocytosis, acidification of the endosome induces dissociation of E1/E2 heterodimer and concomitant trimerization of the E1 subunits. This E1 trimer is fusion active, and promotes release of viral nucleocapsid in cytoplasm after endosome and viral membrane fusion. Efficient fusion requires the presence of cholesterol and sphingolipid in the target membrane. The protein is Structural polyprotein of Acrocephalus scirpaceus (Eurasian reed-warbler).